The primary structure comprises 712 residues: Cyclolysin secretion/processing ATP-binding protein CyaB (712 aa).

The 122-residue stretch at 7–128 (QCASVPDSGL…ALWAGELLLC (122 aa)) folds into the Peptidase C39 domain. The region spanning 157 to 439 (IGEVLLISLV…LAQLWNDFQQ (283 aa)) is the ABC transmembrane type-1 domain. The next 6 membrane-spanning stretches (helical) occupy residues 160–180 (VLLI…FFQV), 194–214 (LNVI…LTGI), 272–292 (AVTV…MFFY), 298–318 (LVVL…TPVL), 367–387 (VAAG…VTLI), and 390–410 (LVAL…RMTV). Residues 471-706 (IELDRVSFRY…GGLYARLQAL (236 aa)) enclose the ABC transporter domain. 505–512 (GRSGSGKS) provides a ligand contact to ATP.

This sequence belongs to the ABC transporter superfamily. Cyclolysin exporter (TC 3.A.1.109.2) family.

It localises to the cell membrane. Its function is as follows. Involved in the export of calmodulin-sensitive adenylate cyclase-hemolysin (cyclolysin). The polypeptide is Cyclolysin secretion/processing ATP-binding protein CyaB (cyaB) (Bordetella pertussis (strain Tohama I / ATCC BAA-589 / NCTC 13251)).